Here is a 109-residue protein sequence, read N- to C-terminus: Large ribosomal subunit protein uL22 (109 aa).

It belongs to the universal ribosomal protein uL22 family. In terms of assembly, part of the 50S ribosomal subunit.

Functionally, this protein binds specifically to 23S rRNA; its binding is stimulated by other ribosomal proteins, e.g. L4, L17, and L20. It is important during the early stages of 50S assembly. It makes multiple contacts with different domains of the 23S rRNA in the assembled 50S subunit and ribosome. In terms of biological role, the globular domain of the protein is located near the polypeptide exit tunnel on the outside of the subunit, while an extended beta-hairpin is found that lines the wall of the exit tunnel in the center of the 70S ribosome. The protein is Large ribosomal subunit protein uL22 of Dehalococcoides mccartyi (strain ATCC BAA-2100 / JCM 16839 / KCTC 5957 / BAV1).